The chain runs to 436 residues: Serine/threonine-protein kinase 40 (436 aa).

The segment covering 1 to 10 (MKRRASDRGA) has biased composition (basic and acidic residues). The tract at residues 1–25 (MKRRASDRGAGETSARAKALGSGIS) is disordered. Residues 35 to 332 (FILGPRLGNS…DVLEALSSII (298 aa)) form the Protein kinase domain. ATP-binding positions include 41-49 (LGNSPVPSI) and Lys-66. Residue Asp-197 is the Proton acceptor of the active site. Positions 396-417 (RSWVPKRQSGAGVPPVRRLGHD) are disordered.

This sequence belongs to the protein kinase superfamily. CAMK Ser/Thr protein kinase family.

Its subcellular location is the nucleus. It localises to the cytoplasm. It catalyses the reaction L-seryl-[protein] + ATP = O-phospho-L-seryl-[protein] + ADP + H(+). The enzyme catalyses L-threonyl-[protein] + ATP = O-phospho-L-threonyl-[protein] + ADP + H(+). In terms of biological role, may be a negative regulator of NF-kappa-B and p53-mediated gene transcription. The sequence is that of Serine/threonine-protein kinase 40 (STK40) from Bos taurus (Bovine).